The following is a 319-amino-acid chain: Thioredoxin reductase (319 aa).

FAD is bound by residues 11-14 (SGPA), 40-41 (IA), Gln45, Asn54, Cys145, Asp288, and 295-297 (RQA). A disulfide bridge links Cys142 with Cys145.

The protein belongs to the class-II pyridine nucleotide-disulfide oxidoreductase family. Homodimer. FAD is required as a cofactor.

It localises to the cytoplasm. It catalyses the reaction [thioredoxin]-dithiol + NADP(+) = [thioredoxin]-disulfide + NADPH + H(+). The polypeptide is Thioredoxin reductase (TRR1) (Candida glabrata (strain ATCC 2001 / BCRC 20586 / JCM 3761 / NBRC 0622 / NRRL Y-65 / CBS 138) (Yeast)).